A 499-amino-acid polypeptide reads, in one-letter code: uncharacterized protein (499 aa).

Residues 6-35 (EAVI…VIER) and 272-282 (YRDGRIFLAGD) contribute to the FAD site.

The protein belongs to the PheA/TfdB FAD monooxygenase family. It depends on FAD as a cofactor.

This is an uncharacterized protein from Bacillus subtilis (strain 168).